The chain runs to 340 residues: Inactive hyaluronidase B (340 aa).

Intrachain disulfides connect Cys-21–Cys-310 and Cys-187–Cys-199. 2 N-linked (GlcNAc...) asparagine glycosylation sites follow: Asn-66 and Asn-81.

This sequence belongs to the glycosyl hydrolase 56 family. N-glycosylated on at least two Asn residues by identical heptasaccharide units composed of Man, GlcNAc, and Fuc residues in the molar ration of 3:2:2. Expressed by the venom gland.

It is found in the secreted. In terms of biological role, has no hyaluronidase activity. The polypeptide is Inactive hyaluronidase B (Vespula vulgaris (Yellow jacket)).